The sequence spans 245 residues: Protein-L-isoaspartate O-methyltransferase 1 (245 aa).

Ser76 is an active-site residue.

This sequence belongs to the methyltransferase superfamily. L-isoaspartyl/D-aspartyl protein methyltransferase family.

It is found in the cytoplasm. It carries out the reaction [protein]-L-isoaspartate + S-adenosyl-L-methionine = [protein]-L-isoaspartate alpha-methyl ester + S-adenosyl-L-homocysteine. Functionally, catalyzes the methyl esterification of L-isoaspartyl residues in peptides and proteins that result from spontaneous decomposition of normal L-aspartyl and L-asparaginyl residues. It plays a role in the repair and/or degradation of damaged proteins. This is Protein-L-isoaspartate O-methyltransferase 1 from Rhodopseudomonas palustris (strain HaA2).